A 231-amino-acid chain; its full sequence is Sporulation protein RMD6 (231 aa).

The protein localises to the peroxisome. Its function is as follows. Required for sporulation. Required for meiotic nuclear division. The protein is Sporulation protein RMD6 (RMD6) of Saccharomyces cerevisiae (strain ATCC 204508 / S288c) (Baker's yeast).